Here is a 439-residue protein sequence, read N- to C-terminus: sn-glycerol-3-phosphate-binding periplasmic protein UgpB (439 aa).

The first 25 residues, 1 to 25 (MFNNSIHKVSICIALTLTFSANAMA), serve as a signal peptide directing secretion. Sn-glycerol 3-phosphate contacts are provided by Tyr67, Glu91, Ser146, Ser272, Gly309, Tyr348, and Arg399.

The protein belongs to the bacterial solute-binding protein 1 family. As to quaternary structure, the complex is composed of two ATP-binding proteins (UgpC), two transmembrane proteins (UgpA and UgpE) and a solute-binding protein (UgpB).

The protein resides in the periplasm. In terms of biological role, part of the ABC transporter complex UgpBAEC involved in sn-glycerol-3-phosphate (G3P) import. Binds G3P. The chain is sn-glycerol-3-phosphate-binding periplasmic protein UgpB (ugpB) from Yersinia pestis bv. Antiqua (strain Antiqua).